The primary structure comprises 542 residues: CTP synthase (542 aa).

Residues 1–265 (MARYVFITGG…DSEILSAFGI (265 aa)) are amidoligase domain. A CTP-binding site is contributed by Ser-13. Ser-13 serves as a coordination point for UTP. 14 to 19 (SLGKGI) lines the ATP pocket. Tyr-54 lines the L-glutamine pocket. Asp-71 serves as a coordination point for ATP. Asp-71 and Glu-139 together coordinate Mg(2+). CTP-binding positions include 146–148 (DIE), 186–191 (KTKPTQ), and Lys-222. UTP contacts are provided by residues 186–191 (KTKPTQ) and Lys-222. The region spanning 291–541 (TIAIVGKYTG…IAATVEQSRL (251 aa)) is the Glutamine amidotransferase type-1 domain. Residue Ala-353 participates in L-glutamine binding. The Nucleophile; for glutamine hydrolysis role is filled by Cys-380. L-glutamine-binding positions include 381-384 (FGMQ), Glu-404, and Arg-469. Catalysis depends on residues His-514 and Glu-516.

It belongs to the CTP synthase family. Homotetramer.

The catalysed reaction is UTP + L-glutamine + ATP + H2O = CTP + L-glutamate + ADP + phosphate + 2 H(+). It catalyses the reaction L-glutamine + H2O = L-glutamate + NH4(+). The enzyme catalyses UTP + NH4(+) + ATP = CTP + ADP + phosphate + 2 H(+). Its pathway is pyrimidine metabolism; CTP biosynthesis via de novo pathway; CTP from UDP: step 2/2. With respect to regulation, allosterically activated by GTP, when glutamine is the substrate; GTP has no effect on the reaction when ammonia is the substrate. The allosteric effector GTP functions by stabilizing the protein conformation that binds the tetrahedral intermediate(s) formed during glutamine hydrolysis. Inhibited by the product CTP, via allosteric rather than competitive inhibition. Functionally, catalyzes the ATP-dependent amination of UTP to CTP with either L-glutamine or ammonia as the source of nitrogen. Regulates intracellular CTP levels through interactions with the four ribonucleotide triphosphates. This is CTP synthase from Bartonella bacilliformis (strain ATCC 35685 / KC583 / Herrer 020/F12,63).